Here is a 231-residue protein sequence, read N- to C-terminus: Biosynthetic peptidoglycan transglycosylase (231 aa).

Residues 12-32 (LLAAFALLLLWQVWLFAQVAW) form a helical membrane-spanning segment.

This sequence belongs to the glycosyltransferase 51 family.

The protein localises to the cell inner membrane. It carries out the reaction [GlcNAc-(1-&gt;4)-Mur2Ac(oyl-L-Ala-gamma-D-Glu-L-Lys-D-Ala-D-Ala)](n)-di-trans,octa-cis-undecaprenyl diphosphate + beta-D-GlcNAc-(1-&gt;4)-Mur2Ac(oyl-L-Ala-gamma-D-Glu-L-Lys-D-Ala-D-Ala)-di-trans,octa-cis-undecaprenyl diphosphate = [GlcNAc-(1-&gt;4)-Mur2Ac(oyl-L-Ala-gamma-D-Glu-L-Lys-D-Ala-D-Ala)](n+1)-di-trans,octa-cis-undecaprenyl diphosphate + di-trans,octa-cis-undecaprenyl diphosphate + H(+). Its pathway is cell wall biogenesis; peptidoglycan biosynthesis. Peptidoglycan polymerase that catalyzes glycan chain elongation from lipid-linked precursors. The sequence is that of Biosynthetic peptidoglycan transglycosylase from Azoarcus sp. (strain BH72).